The chain runs to 317 residues: Melanocyte-stimulating hormone receptor (317 aa).

At 1-37 the chain is on the extracellular side; sequence MPMHGAQRKLLGSLNSTPTATSNLGLAANHTGAPCLE. N-linked (GlcNAc...) asparagine glycosylation occurs at N29. Residues 38-63 form a helical membrane-spanning segment; it reads VSIPDGLFLSLGLVSLVENVLVVAAI. At 64 to 72 the chain is on the cytoplasmic side; the sequence is AKNRNLHSS. The helical transmembrane segment at 73 to 93 threads the bilayer; sequence MYCFICCLALSDLLVSGSNML. Residues 94-118 are Extracellular-facing; that stretch reads ETAVILLLEAGALATRTSAMQQLHN. Residues 119 to 140 traverse the membrane as a helical segment; the sequence is TIDVLTCSSMLCSLCFLGAIAV. The Cytoplasmic portion of the chain corresponds to 141 to 163; that stretch reads DRYISIFYALRYHSIMTLPRAQR. The chain crosses the membrane as a helical span at residues 164-183; the sequence is AIAAIWVASXLSSTLFITYY. Topologically, residues 184–191 are extracellular; the sequence is DHAAVLLC. A helical membrane pass occupies residues 192–211; sequence LVVFFLAMLVLMAVLYVHML. The Cytoplasmic portion of the chain corresponds to 212 to 240; it reads ARACQHAHGIIRLHKRQTPAHQGFGLRGA. Residues 241–266 form a helical membrane-spanning segment; it reads ATLTILLGIFFLCWGPFFLHLTLVVF. Residues 267–279 lie on the Extracellular side of the membrane; sequence CPQHLTCSCIFKN. Residues 280–300 traverse the membrane as a helical segment; sequence FKVFLTLIICNTIIDPLIYAF. At 301 to 317 the chain is on the cytoplasmic side; the sequence is RSQELRRTLKEVLLCSW. Residue C315 is the site of S-palmitoyl cysteine attachment.

The protein belongs to the G-protein coupled receptor 1 family. In terms of assembly, interacts with MGRN1, but does not undergo MGRN1-mediated ubiquitination; this interaction competes with GNAS-binding and thus inhibits agonist-induced cAMP production. Interacts with OPN3; the interaction results in a decrease in MC1R-mediated cAMP signaling and ultimately a decrease in melanin production in melanocytes.

The protein localises to the cell membrane. Its function is as follows. Receptor for MSH (alpha, beta and gamma) and ACTH. The activity of this receptor is mediated by G proteins which activate adenylate cyclase. Mediates melanogenesis, the production of eumelanin (black/brown) and phaeomelanin (red/yellow), via regulation of cAMP signaling in melanocytes. The sequence is that of Melanocyte-stimulating hormone receptor (MC1R) from Saguinus midas (Golden-handed tamarin).